The following is a 198-amino-acid chain: FMN-dependent NADH:quinone oxidoreductase (198 aa).

FMN-binding positions include Ser-9 and 95 to 98 (MYNF).

It belongs to the azoreductase type 1 family. In terms of assembly, homodimer. FMN serves as cofactor.

It catalyses the reaction 2 a quinone + NADH + H(+) = 2 a 1,4-benzosemiquinone + NAD(+). The catalysed reaction is N,N-dimethyl-1,4-phenylenediamine + anthranilate + 2 NAD(+) = 2-(4-dimethylaminophenyl)diazenylbenzoate + 2 NADH + 2 H(+). In terms of biological role, quinone reductase that provides resistance to thiol-specific stress caused by electrophilic quinones. Its function is as follows. Also exhibits azoreductase activity. Catalyzes the reductive cleavage of the azo bond in aromatic azo compounds to the corresponding amines. The protein is FMN-dependent NADH:quinone oxidoreductase of Alcanivorax borkumensis (strain ATCC 700651 / DSM 11573 / NCIMB 13689 / SK2).